The chain runs to 170 residues: Probable T4-type lysozyme 1 (170 aa).

Glutamate 13 acts as the Proton donor in catalysis. Aspartate 22 serves as the catalytic Nucleophile.

Belongs to the glycosyl hydrolase 24 family.

The enzyme catalyses Hydrolysis of (1-&gt;4)-beta-linkages between N-acetylmuramic acid and N-acetyl-D-glucosamine residues in a peptidoglycan and between N-acetyl-D-glucosamine residues in chitodextrins.. In Dictyostelium discoideum (Social amoeba), this protein is Probable T4-type lysozyme 1.